Consider the following 350-residue polypeptide: 3-dehydroquinate synthase (350 aa).

NAD(+) is bound by residues 106–110 (GVVGD), 130–131 (TS), Lys143, and Lys152. Positions 185, 246, and 263 each coordinate Zn(2+).

Belongs to the sugar phosphate cyclases superfamily. Dehydroquinate synthase family. Co(2+) serves as cofactor. The cofactor is Zn(2+). Requires NAD(+) as cofactor.

The protein resides in the cytoplasm. It carries out the reaction 7-phospho-2-dehydro-3-deoxy-D-arabino-heptonate = 3-dehydroquinate + phosphate. It participates in metabolic intermediate biosynthesis; chorismate biosynthesis; chorismate from D-erythrose 4-phosphate and phosphoenolpyruvate: step 2/7. Its function is as follows. Catalyzes the conversion of 3-deoxy-D-arabino-heptulosonate 7-phosphate (DAHP) to dehydroquinate (DHQ). The chain is 3-dehydroquinate synthase from Clostridium perfringens (strain SM101 / Type A).